The sequence spans 852 residues: Translation initiation factor IF-2 (852 aa).

A disordered region spans residues 1–240 (MEDKNKTIKE…KTSSDKRDFS (240 aa)). Basic and acidic residues predominate over residues 78-90 (KEVKYEESSRKQD). Residues 106–120 (VRPSGDSSYPVSRSP) show a composition bias toward polar residues. Residues 150-200 (RGPGQGGGYQGNRGPGQGGGYQGNRGPGQQTGPGNRFGGSGPGNRSGGPGG) are compositionally biased toward gly residues. A compositionally biased stretch (basic and acidic residues) spans 227 to 240 (HDKEKTSSDKRDFS). The tr-type G domain maps to 347–516 (NRPPVVTIMG…LLQAEVMDLK (170 aa)). The segment at 356-363 (GHVDHGKT) is G1. 356 to 363 (GHVDHGKT) is a binding site for GTP. The G2 stretch occupies residues 381–385 (GITQH). The segment at 402–405 (DTPG) is G3. Residues 402–406 (DTPGH) and 456–459 (NKID) contribute to the GTP site. The segment at 456–459 (NKID) is G4. Positions 492-494 (SAR) are G5.

The protein belongs to the TRAFAC class translation factor GTPase superfamily. Classic translation factor GTPase family. IF-2 subfamily.

The protein resides in the cytoplasm. In terms of biological role, one of the essential components for the initiation of protein synthesis. Protects formylmethionyl-tRNA from spontaneous hydrolysis and promotes its binding to the 30S ribosomal subunits. Also involved in the hydrolysis of GTP during the formation of the 70S ribosomal complex. This chain is Translation initiation factor IF-2, found in Leptospira borgpetersenii serovar Hardjo-bovis (strain JB197).